A 169-amino-acid polypeptide reads, in one-letter code: Inorganic pyrophosphatase (169 aa).

M1 is subject to N-formylmethionine. The substrate site is built by K28, R42, and Y54. D64, D69, and D101 together coordinate Mg(2+). Substrate is bound at residue Y138.

The protein belongs to the PPase family. Homohexamer. Requires Mg(2+) as cofactor.

The protein localises to the cytoplasm. It carries out the reaction diphosphate + H2O = 2 phosphate + H(+). Catalyzes the hydrolysis of inorganic pyrophosphate (PPi) forming two phosphate ions. The sequence is that of Inorganic pyrophosphatase from Nostoc sp. (strain PCC 7120 / SAG 25.82 / UTEX 2576).